The primary structure comprises 202 residues: ATP-dependent Clp protease proteolytic subunit 1 (202 aa).

Catalysis depends on Ser-101, which acts as the Nucleophile. Residue His-126 is part of the active site.

This sequence belongs to the peptidase S14 family. In terms of assembly, fourteen ClpP subunits assemble into 2 heptameric rings which stack back to back to give a disk-like structure with a central cavity, resembling the structure of eukaryotic proteasomes.

The protein localises to the cytoplasm. It carries out the reaction Hydrolysis of proteins to small peptides in the presence of ATP and magnesium. alpha-casein is the usual test substrate. In the absence of ATP, only oligopeptides shorter than five residues are hydrolyzed (such as succinyl-Leu-Tyr-|-NHMec, and Leu-Tyr-Leu-|-Tyr-Trp, in which cleavage of the -Tyr-|-Leu- and -Tyr-|-Trp bonds also occurs).. In terms of biological role, cleaves peptides in various proteins in a process that requires ATP hydrolysis. Has a chymotrypsin-like activity. Plays a major role in the degradation of misfolded proteins. This Rhizobium etli (strain ATCC 51251 / DSM 11541 / JCM 21823 / NBRC 15573 / CFN 42) protein is ATP-dependent Clp protease proteolytic subunit 1.